The primary structure comprises 189 residues: SAGA-associated factor 11 homolog (189 aa).

The SGF11-type zinc-finger motif lies at 94 to 115 (CTCPNCDRLVAATRFAPHLEKC). The segment at 128–189 (RRLATKEGSS…GSKKNNGKTF (62 aa)) is disordered. Positions 136–145 (SSASSTSTST) are enriched in low complexity. S165 bears the Phosphoserine mark. Low complexity predominate over residues 175 to 189 (NSRNNGSKKNNGKTF).

The protein belongs to the SGF11 family. Component of some SAGA transcription coactivator-HAT complexes, at least composed of Ada2b, not/nonstop, Pcaf/Gcn5, Sgf11 and Spt3. Within the SAGA complex, Sgf11, e(y)2, and not/nonstop form an additional subcomplex of SAGA called the DUB module (deubiquitination module). Interacts directly with not/nonstop. Interacts with the AMEX complex component xmas-2. Interacts with Cbp80; important for promoter recruitment of Sgf11 that is not associated with the DUB module.

The protein localises to the nucleus. It localises to the nucleoplasm. Its subcellular location is the cytoplasm. Component of the transcription regulatory histone acetylation (HAT) complex SAGA, a multiprotein complex that activates transcription by remodeling chromatin and mediating histone acetylation and deubiquitination. Within the SAGA complex, participates in a subcomplex that specifically deubiquitinates histone H2B. The SAGA complex is recruited to specific gene promoters by activators, where it is required for transcription. Required for nuclear receptor-mediated transactivation. Binds independently on SAGA to promoters in an RNA-dependent manner. Binds to mRNA and is essential for total mRNA export from the nucleus. Required to counteract heterochromatin silencing. Controls the development of neuronal connectivity in visual system by being required for accurate axon targeting in the optic lobe. Required for expression of ecdysone-induced genes such as br/broad. In Drosophila virilis (Fruit fly), this protein is SAGA-associated factor 11 homolog.